A 258-amino-acid chain; its full sequence is Methylthioribulose-1-phosphate dehydratase (258 aa).

Residues 1–20 (MTPPSNGQAAETNDHLVQSD) show a composition bias toward polar residues. Residues 1-21 (MTPPSNGQAAETNDHLVQSDN) form a disordered region. C105 contributes to the substrate binding site. 2 residues coordinate Zn(2+): H123 and H125. Catalysis depends on E153, which acts as the Proton donor/acceptor. Zn(2+) is bound at residue H210.

This sequence belongs to the aldolase class II family. MtnB subfamily. It depends on Zn(2+) as a cofactor.

Its subcellular location is the cytoplasm. It catalyses the reaction 5-(methylsulfanyl)-D-ribulose 1-phosphate = 5-methylsulfanyl-2,3-dioxopentyl phosphate + H2O. Its pathway is amino-acid biosynthesis; L-methionine biosynthesis via salvage pathway; L-methionine from S-methyl-5-thio-alpha-D-ribose 1-phosphate: step 2/6. Functionally, catalyzes the dehydration of methylthioribulose-1-phosphate (MTRu-1-P) into 2,3-diketo-5-methylthiopentyl-1-phosphate (DK-MTP-1-P). The protein is Methylthioribulose-1-phosphate dehydratase of Chaetomium globosum (strain ATCC 6205 / CBS 148.51 / DSM 1962 / NBRC 6347 / NRRL 1970) (Soil fungus).